Consider the following 550-residue polypeptide: Arginine--tRNA ligase (550 aa).

The 'HIGH' region signature appears at 124-134 (ANPTGPLHVGH).

This sequence belongs to the class-I aminoacyl-tRNA synthetase family. As to quaternary structure, monomer.

Its subcellular location is the cytoplasm. It catalyses the reaction tRNA(Arg) + L-arginine + ATP = L-arginyl-tRNA(Arg) + AMP + diphosphate. The polypeptide is Arginine--tRNA ligase (Desulfovibrio desulfuricans (strain ATCC 27774 / DSM 6949 / MB)).